A 303-amino-acid polypeptide reads, in one-letter code: Protein-lysine N-methyltransferase rrg1 (303 aa).

Residues Trp-117, 143-145 (GAG), Asp-165, Trp-198, and Ser-221 contribute to the S-adenosyl-L-methionine site.

Belongs to the class I-like SAM-binding methyltransferase superfamily. METTL21 family.

Its subcellular location is the cytoplasm. The protein localises to the nucleus. In terms of biological role, S-adenosyl-L-methionine-dependent protein-lysine N-methyltransferase that methylates elongation factor 2 and elongation factor 3A. The polypeptide is Protein-lysine N-methyltransferase rrg1 (Schizosaccharomyces pombe (strain 972 / ATCC 24843) (Fission yeast)).